A 169-amino-acid polypeptide reads, in one-letter code: Inorganic pyrophosphatase (169 aa).

An N-formylmethionine modification is found at Met-1. Lys-28, Arg-42, and Tyr-54 together coordinate substrate. Residues Asp-64, Asp-69, and Asp-101 each contribute to the Mg(2+) site. Tyr-138 contacts substrate.

It belongs to the PPase family. Homohexamer. Requires Mg(2+) as cofactor.

The protein resides in the cytoplasm. The enzyme catalyses diphosphate + H2O = 2 phosphate + H(+). Functionally, catalyzes the hydrolysis of inorganic pyrophosphate (PPi) forming two phosphate ions. The sequence is that of Inorganic pyrophosphatase from Nostoc sp. (strain PCC 7120 / SAG 25.82 / UTEX 2576).